Reading from the N-terminus, the 283-residue chain is Phosphatidylserine decarboxylase proenzyme (283 aa).

Catalysis depends on charge relay system; for autoendoproteolytic cleavage activity residues D96, H152, and S250. The active-site Schiff-base intermediate with substrate; via pyruvic acid; for decarboxylase activity is S250. Residue S250 is modified to Pyruvic acid (Ser); by autocatalysis.

Belongs to the phosphatidylserine decarboxylase family. PSD-B subfamily. Prokaryotic type I sub-subfamily. As to quaternary structure, heterodimer of a large membrane-associated beta subunit and a small pyruvoyl-containing alpha subunit. The cofactor is pyruvate. Is synthesized initially as an inactive proenzyme. Formation of the active enzyme involves a self-maturation process in which the active site pyruvoyl group is generated from an internal serine residue via an autocatalytic post-translational modification. Two non-identical subunits are generated from the proenzyme in this reaction, and the pyruvate is formed at the N-terminus of the alpha chain, which is derived from the carboxyl end of the proenzyme. The autoendoproteolytic cleavage occurs by a canonical serine protease mechanism, in which the side chain hydroxyl group of the serine supplies its oxygen atom to form the C-terminus of the beta chain, while the remainder of the serine residue undergoes an oxidative deamination to produce ammonia and the pyruvoyl prosthetic group on the alpha chain. During this reaction, the Ser that is part of the protease active site of the proenzyme becomes the pyruvoyl prosthetic group, which constitutes an essential element of the active site of the mature decarboxylase.

The protein localises to the cell membrane. The enzyme catalyses a 1,2-diacyl-sn-glycero-3-phospho-L-serine + H(+) = a 1,2-diacyl-sn-glycero-3-phosphoethanolamine + CO2. It participates in phospholipid metabolism; phosphatidylethanolamine biosynthesis; phosphatidylethanolamine from CDP-diacylglycerol: step 2/2. Catalyzes the formation of phosphatidylethanolamine (PtdEtn) from phosphatidylserine (PtdSer). The chain is Phosphatidylserine decarboxylase proenzyme from Acinetobacter baumannii (strain SDF).